The chain runs to 484 residues: Protein nucleotidyltransferase YdiU (484 aa).

Residues G81, G83, R84, K103, D115, G116, R166, and R173 each coordinate ATP. The active-site Proton acceptor is the D244. Residues N245 and D254 each coordinate Mg(2+). D254 lines the ATP pocket.

Belongs to the SELO family. Mg(2+) is required as a cofactor. It depends on Mn(2+) as a cofactor.

It carries out the reaction L-seryl-[protein] + ATP = 3-O-(5'-adenylyl)-L-seryl-[protein] + diphosphate. The catalysed reaction is L-threonyl-[protein] + ATP = 3-O-(5'-adenylyl)-L-threonyl-[protein] + diphosphate. The enzyme catalyses L-tyrosyl-[protein] + ATP = O-(5'-adenylyl)-L-tyrosyl-[protein] + diphosphate. It catalyses the reaction L-histidyl-[protein] + UTP = N(tele)-(5'-uridylyl)-L-histidyl-[protein] + diphosphate. It carries out the reaction L-seryl-[protein] + UTP = O-(5'-uridylyl)-L-seryl-[protein] + diphosphate. The catalysed reaction is L-tyrosyl-[protein] + UTP = O-(5'-uridylyl)-L-tyrosyl-[protein] + diphosphate. Functionally, nucleotidyltransferase involved in the post-translational modification of proteins. It can catalyze the addition of adenosine monophosphate (AMP) or uridine monophosphate (UMP) to a protein, resulting in modifications known as AMPylation and UMPylation. The polypeptide is Protein nucleotidyltransferase YdiU (Shewanella baltica (strain OS195)).